Consider the following 264-residue polypeptide: Thymidylate synthase (264 aa).

Arg-21 serves as a coordination point for dUMP. His-51 provides a ligand contact to (6R)-5,10-methylene-5,6,7,8-tetrahydrofolate. Position 126–127 (126–127 (RR)) interacts with dUMP. Catalysis depends on Cys-146, which acts as the Nucleophile. DUMP-binding positions include 166–169 (RSCD), Asn-177, and 207–209 (HLY). Asp-169 serves as a coordination point for (6R)-5,10-methylene-5,6,7,8-tetrahydrofolate. Ala-263 is a binding site for (6R)-5,10-methylene-5,6,7,8-tetrahydrofolate.

It belongs to the thymidylate synthase family. Bacterial-type ThyA subfamily. Homodimer.

The protein resides in the cytoplasm. It catalyses the reaction dUMP + (6R)-5,10-methylene-5,6,7,8-tetrahydrofolate = 7,8-dihydrofolate + dTMP. Its pathway is pyrimidine metabolism; dTTP biosynthesis. Functionally, catalyzes the reductive methylation of 2'-deoxyuridine-5'-monophosphate (dUMP) to 2'-deoxythymidine-5'-monophosphate (dTMP) while utilizing 5,10-methylenetetrahydrofolate (mTHF) as the methyl donor and reductant in the reaction, yielding dihydrofolate (DHF) as a by-product. This enzymatic reaction provides an intracellular de novo source of dTMP, an essential precursor for DNA biosynthesis. In Yersinia pseudotuberculosis serotype O:1b (strain IP 31758), this protein is Thymidylate synthase.